The sequence spans 777 residues: Isoamylase (777 aa).

Positions 1-32 (MDPHAPQRQRSGQRLRALALAALACALSPAHA) are cleaved as a signal peptide. Ca(2+)-binding residues include Asp-162, Glu-263, Thr-264, Asn-266, and Asp-293. Asp-410 acts as the Nucleophile in catalysis. A disulfide bond links Cys-419 and Cys-423. Glu-458 serves as the catalytic Proton donor.

It belongs to the glycosyl hydrolase 13 family. As to quaternary structure, monomer. Requires Ca(2+) as cofactor.

The catalysed reaction is Hydrolysis of (1-&gt;6)-alpha-D-glucosidic branch linkages in glycogen, amylopectin and their beta-limit dextrins.. Functionally, has a high rate of hydrolysis for glycogen. Does not cleave pullulan. In Flavobacterium sp, this protein is Isoamylase (iam).